The sequence spans 269 residues: Triosephosphate isomerase (269 aa).

8 to 10 contributes to the substrate binding site; sequence NWK. The active-site Electrophile is the histidine 105. The Proton acceptor role is filled by glutamate 183. Substrate contacts are provided by residues glycine 189, serine 227, and 248 to 249; that span reads GG.

Belongs to the triosephosphate isomerase family. As to quaternary structure, homodimer.

The protein resides in the cytoplasm. The enzyme catalyses D-glyceraldehyde 3-phosphate = dihydroxyacetone phosphate. It functions in the pathway carbohydrate biosynthesis; gluconeogenesis. Its pathway is carbohydrate degradation; glycolysis; D-glyceraldehyde 3-phosphate from glycerone phosphate: step 1/1. In terms of biological role, involved in the gluconeogenesis. Catalyzes stereospecifically the conversion of dihydroxyacetone phosphate (DHAP) to D-glyceraldehyde-3-phosphate (G3P). This is Triosephosphate isomerase from Psychrobacter arcticus (strain DSM 17307 / VKM B-2377 / 273-4).